Here is a 590-residue protein sequence, read N- to C-terminus: Probable metalloendopeptidase G1-type (590 aa).

Position 41 (His41) interacts with Zn(2+). The active site involves Glu44. His45 serves as a coordination point for Zn(2+).

The protein belongs to the peptidase M44 family. Requires Zn(2+) as cofactor.

Functionally, seems to be involved in viral proteins maturation by cleavage at Ala-Gly-|-Xaa motifs. This chain is Probable metalloendopeptidase G1-type, found in Oryctolagus cuniculus (Rabbit).